The following is a 428-amino-acid chain: Tyrosine--tRNA ligase (428 aa).

Residue tyrosine 36 coordinates L-tyrosine. The 'HIGH' region motif lies at 41–50 (PTAPSLHAGH). L-tyrosine is bound by residues tyrosine 171 and glutamine 175. The short motif at 231 to 235 (KFGKS) is the 'KMSKS' region element. Lysine 234 contributes to the ATP binding site. In terms of domain architecture, S4 RNA-binding spans 359 to 416 (DSIVDLLVETGLAASKGAARRNVAEGGVYVNNIRIESDEWIPQHSDFLHERWLVLRRG).

The protein belongs to the class-I aminoacyl-tRNA synthetase family. TyrS type 1 subfamily. In terms of assembly, homodimer.

It is found in the cytoplasm. The catalysed reaction is tRNA(Tyr) + L-tyrosine + ATP = L-tyrosyl-tRNA(Tyr) + AMP + diphosphate + H(+). Functionally, catalyzes the attachment of tyrosine to tRNA(Tyr) in a two-step reaction: tyrosine is first activated by ATP to form Tyr-AMP and then transferred to the acceptor end of tRNA(Tyr). The polypeptide is Tyrosine--tRNA ligase (Mycolicibacterium fortuitum (Mycobacterium fortuitum)).